The primary structure comprises 710 residues: Assimilatory nitrate reductase catalytic subunit (710 aa).

The 4Fe-4S Mo/W bis-MGD-type domain maps to 19–77 (EKTYDTQCPFCSMQCKMQLVEQTIVTRKKYTAIGIDNPTTQGRLCIKGMNAHQHALNSS). [4Fe-4S] cluster contacts are provided by C26, C29, C33, and C63.

It belongs to the prokaryotic molybdopterin-containing oxidoreductase family. [4Fe-4S] cluster is required as a cofactor. It depends on Mo-bis(molybdopterin guanine dinucleotide) as a cofactor.

Its pathway is nitrogen metabolism; nitrate reduction (denitrification); dinitrogen from nitrate: step 1/4. In terms of biological role, nitrate reductase is a key enzyme involved in the first step of nitrate assimilation in plants, fungi and bacteria. This chain is Assimilatory nitrate reductase catalytic subunit (nasC), found in Bacillus subtilis (strain 168).